Reading from the N-terminus, the 416-residue chain is Gamma-glutamyl phosphate reductase (416 aa).

Belongs to the gamma-glutamyl phosphate reductase family.

It is found in the cytoplasm. It carries out the reaction L-glutamate 5-semialdehyde + phosphate + NADP(+) = L-glutamyl 5-phosphate + NADPH + H(+). Its pathway is amino-acid biosynthesis; L-proline biosynthesis; L-glutamate 5-semialdehyde from L-glutamate: step 2/2. Catalyzes the NADPH-dependent reduction of L-glutamate 5-phosphate into L-glutamate 5-semialdehyde and phosphate. The product spontaneously undergoes cyclization to form 1-pyrroline-5-carboxylate. This is Gamma-glutamyl phosphate reductase from Streptococcus pyogenes serotype M6 (strain ATCC BAA-946 / MGAS10394).